We begin with the raw amino-acid sequence, 84 residues long: Envelope small membrane protein (84 aa).

Topologically, residues 1–18 are virion surface; the sequence is MFMADAYFADTVWYVGQI. A helical membrane pass occupies residues 19-39; the sequence is IFIVAICLLVIIVVVAFLATF. At 40-80 the chain is on the intravirion side; that stretch reads KLCIQLCGMCNTLVLSPSIYVFNRGRQFYEFYNDVKPPVLD.

Belongs to the betacoronaviruses E protein family. In terms of assembly, homopentamer. Interacts with membrane protein M in the budding compartment of the host cell, which is located between endoplasmic reticulum and the Golgi complex. Interacts with Nucleoprotein.

It localises to the host Golgi apparatus membrane. In terms of biological role, plays a central role in virus morphogenesis and assembly. Acts as a viroporin and self-assembles in host membranes forming pentameric protein-lipid pores that allow ion transport. Also plays a role in the induction of apoptosis. The chain is Envelope small membrane protein from Bovine coronavirus (strain 98TXSF-110-ENT) (BCoV-ENT).